The chain runs to 148 residues: Large ribosomal subunit protein uL15 (148 aa).

The span at 1–30 (MPSRLRKTRKLRGHVSHGHGRIGKHRKHPG) shows a compositional bias: basic residues. The segment at 1 to 37 (MPSRLRKTRKLRGHVSHGHGRIGKHRKHPGGRGNAGG) is disordered. Histidine 39 carries the post-translational modification (3S)-3-hydroxyhistidine. N6-acetyllysine occurs at positions 47 and 55. A Phosphoserine modification is found at serine 68. Lysine 110 is subject to N6-acetyllysine.

This sequence belongs to the universal ribosomal protein uL15 family. Component of the large ribosomal subunit. Hydroxylated on His-39 by MINA.

It is found in the cytoplasm. In terms of biological role, component of the large ribosomal subunit. The ribosome is a large ribonucleoprotein complex responsible for the synthesis of proteins in the cell. This Rattus norvegicus (Rat) protein is Large ribosomal subunit protein uL15 (Rpl27a).